Reading from the N-terminus, the 1581-residue chain is Pentafunctional AROM polypeptide (1581 aa).

Residues Met1–Asn384 form a 3-dehydroquinate synthase region. Residues Asp44–Asn46, Glu81–Lys84, Gly114–Val116, and Asp119 each bind NAD(+). Arg130 is a binding site for 7-phospho-2-dehydro-3-deoxy-D-arabino-heptonate. Thr139 to Thr140 contributes to the NAD(+) binding site. Residues Asp146 and Lys152 each contribute to the 7-phospho-2-dehydro-3-deoxy-D-arabino-heptonate site. Lys161 contributes to the NAD(+) binding site. Residue Asn162 participates in 7-phospho-2-dehydro-3-deoxy-D-arabino-heptonate binding. Residues Phe179 to Thr182 and Asn190 contribute to the NAD(+) site. Glu194 provides a ligand contact to Zn(2+). 7-phospho-2-dehydro-3-deoxy-D-arabino-heptonate-binding positions include Glu194 to Lys197 and Lys250. Catalysis depends on Glu260, which acts as the Proton acceptor; for 3-dehydroquinate synthase activity. 7-phospho-2-dehydro-3-deoxy-D-arabino-heptonate-binding positions include Arg264 to Asn268 and His271. His271 is a binding site for Zn(2+). His275 (proton acceptor; for 3-dehydroquinate synthase activity) is an active-site residue. 7-phospho-2-dehydro-3-deoxy-D-arabino-heptonate is bound by residues His287 and Lys356. His287 serves as a coordination point for Zn(2+). Positions Val397–Val842 are EPSP synthase. The For EPSP synthase activity role is filled by Cys824. The segment at Ser864 to Ser1056 is shikimate kinase. Gly871–Thr878 is a binding site for ATP. The interval Leu1057–Glu1277 is 3-dehydroquinase. The active-site Proton acceptor; for 3-dehydroquinate dehydratase activity is the His1180. The Schiff-base intermediate with substrate; for 3-dehydroquinate dehydratase activity role is filled by Lys1208. Residues Lys1290–Ala1581 are shikimate dehydrogenase.

This sequence in the N-terminal section; belongs to the sugar phosphate cyclases superfamily. Dehydroquinate synthase family. In the 2nd section; belongs to the EPSP synthase family. It in the 3rd section; belongs to the shikimate kinase family. The protein in the 4th section; belongs to the type-I 3-dehydroquinase family. This sequence in the C-terminal section; belongs to the shikimate dehydrogenase family. Homodimer. The cofactor is Zn(2+).

Its subcellular location is the cytoplasm. It catalyses the reaction 7-phospho-2-dehydro-3-deoxy-D-arabino-heptonate = 3-dehydroquinate + phosphate. The enzyme catalyses 3-dehydroquinate = 3-dehydroshikimate + H2O. It carries out the reaction shikimate + NADP(+) = 3-dehydroshikimate + NADPH + H(+). The catalysed reaction is shikimate + ATP = 3-phosphoshikimate + ADP + H(+). It catalyses the reaction 3-phosphoshikimate + phosphoenolpyruvate = 5-O-(1-carboxyvinyl)-3-phosphoshikimate + phosphate. It functions in the pathway metabolic intermediate biosynthesis; chorismate biosynthesis; chorismate from D-erythrose 4-phosphate and phosphoenolpyruvate: step 2/7. Its pathway is metabolic intermediate biosynthesis; chorismate biosynthesis; chorismate from D-erythrose 4-phosphate and phosphoenolpyruvate: step 3/7. It participates in metabolic intermediate biosynthesis; chorismate biosynthesis; chorismate from D-erythrose 4-phosphate and phosphoenolpyruvate: step 4/7. The protein operates within metabolic intermediate biosynthesis; chorismate biosynthesis; chorismate from D-erythrose 4-phosphate and phosphoenolpyruvate: step 5/7. It functions in the pathway metabolic intermediate biosynthesis; chorismate biosynthesis; chorismate from D-erythrose 4-phosphate and phosphoenolpyruvate: step 6/7. The AROM polypeptide catalyzes 5 consecutive enzymatic reactions in prechorismate polyaromatic amino acid biosynthesis. The chain is Pentafunctional AROM polypeptide from Aspergillus terreus (strain NIH 2624 / FGSC A1156).